The chain runs to 114 residues: Holo-[acyl-carrier-protein] synthase (114 aa).

D5 and E50 together coordinate Mg(2+).

The protein belongs to the P-Pant transferase superfamily. AcpS family. Requires Mg(2+) as cofactor.

The protein resides in the cytoplasm. The catalysed reaction is apo-[ACP] + CoA = holo-[ACP] + adenosine 3',5'-bisphosphate + H(+). Its function is as follows. Transfers the 4'-phosphopantetheine moiety from coenzyme A to a Ser of acyl-carrier-protein. In Campylobacter curvus (strain 525.92), this protein is Holo-[acyl-carrier-protein] synthase.